Here is a 72-residue protein sequence, read N- to C-terminus: Mitotic-spindle organizing protein 1 (72 aa).

Belongs to the MOZART1 family. In terms of assembly, part of the gamma-tubulin complex.

The protein localises to the cytoplasm. It localises to the cytoskeleton. The protein resides in the microtubule organizing center. It is found in the centrosome. Its subcellular location is the spindle. Functionally, required for gamma-tubulin complex recruitment to the centrosome. The chain is Mitotic-spindle organizing protein 1 (mzt1) from Xenopus laevis (African clawed frog).